The following is a 117-amino-acid chain: Large ribosomal subunit protein uL22 (117 aa).

This sequence belongs to the universal ribosomal protein uL22 family. As to quaternary structure, part of the 50S ribosomal subunit.

Functionally, this protein binds specifically to 23S rRNA; its binding is stimulated by other ribosomal proteins, e.g. L4, L17, and L20. It is important during the early stages of 50S assembly. It makes multiple contacts with different domains of the 23S rRNA in the assembled 50S subunit and ribosome. In terms of biological role, the globular domain of the protein is located near the polypeptide exit tunnel on the outside of the subunit, while an extended beta-hairpin is found that lines the wall of the exit tunnel in the center of the 70S ribosome. The chain is Large ribosomal subunit protein uL22 from Staphylococcus epidermidis (strain ATCC 35984 / DSM 28319 / BCRC 17069 / CCUG 31568 / BM 3577 / RP62A).